Consider the following 35-residue polypeptide: Photosystem II reaction center protein M (35 aa).

A helical membrane pass occupies residues Ile5–Ile25.

This sequence belongs to the PsbM family. In terms of assembly, PSII is composed of 1 copy each of membrane proteins PsbA, PsbB, PsbC, PsbD, PsbE, PsbF, PsbH, PsbI, PsbJ, PsbK, PsbL, PsbM, PsbT, PsbX, PsbY, PsbZ, Psb30/Ycf12, at least 3 peripheral proteins of the oxygen-evolving complex and a large number of cofactors. It forms dimeric complexes.

It localises to the plastid. The protein resides in the chloroplast thylakoid membrane. Functionally, one of the components of the core complex of photosystem II (PSII). PSII is a light-driven water:plastoquinone oxidoreductase that uses light energy to abstract electrons from H(2)O, generating O(2) and a proton gradient subsequently used for ATP formation. It consists of a core antenna complex that captures photons, and an electron transfer chain that converts photonic excitation into a charge separation. This subunit is found at the monomer-monomer interface. This Panax quinquefolius (American ginseng) protein is Photosystem II reaction center protein M.